A 240-amino-acid polypeptide reads, in one-letter code: Phosducin-like protein 3 (240 aa).

Position 1 is an N-acetylmethionine (Met1). The Phosducin domain occupies 27–181 (KELEEEEAEK…EGDIKAQFIG (155 aa)). A phosphoserine mark is found at Ser44, Ser65, Ser235, and Ser237. Residues 92 to 240 (FGEVLEISGK…MRRDSDSEDD (149 aa)) are thioredoxin fold.

The protein belongs to the phosducin family. As to quaternary structure, interacts (via thioredoxin fold region) with KDR/VEGFR2 (via juxtamembrane domain). Forms ternary complexes with the chaperonin CCT complex and actin substrate, leading to inhibition of actin folding. Interacts with XIAP (via BIR 3 and RING domain). Interacts with HSP90AA1 and HSP90AB1. In terms of processing, N-terminal methionine acetylation destabilizes the protein. In terms of tissue distribution, expressed in blood vessels (at protein level).

The protein resides in the cytoplasm. It localises to the perinuclear region. Its subcellular location is the endoplasmic reticulum. Acts as a chaperone for the angiogenic VEGF receptor KDR/VEGFR2, increasing its abundance by inhibiting its ubiquitination and degradation. Inhibits the folding activity of the chaperonin-containing T-complex (CCT) which leads to inhibition of cytoskeletal actin folding. Acts as a chaperone during heat shock alongside HSP90 and HSP40/70 chaperone complexes. Modulates the activation of caspases during apoptosis. This chain is Phosducin-like protein 3 (Pdcl3), found in Mus musculus (Mouse).